A 121-amino-acid chain; its full sequence is Small ribosomal subunit protein uS13 (121 aa).

The interval 91 to 121 is disordered; it reads HRKGLPMRGQRTRTNARTRKGPRKAGVALKK.

This sequence belongs to the universal ribosomal protein uS13 family. Part of the 30S ribosomal subunit. Forms a loose heterodimer with protein S19. Forms two bridges to the 50S subunit in the 70S ribosome.

Located at the top of the head of the 30S subunit, it contacts several helices of the 16S rRNA. In the 70S ribosome it contacts the 23S rRNA (bridge B1a) and protein L5 of the 50S subunit (bridge B1b), connecting the 2 subunits; these bridges are implicated in subunit movement. Contacts the tRNAs in the A and P-sites. The protein is Small ribosomal subunit protein uS13 of Cupriavidus necator (strain ATCC 17699 / DSM 428 / KCTC 22496 / NCIMB 10442 / H16 / Stanier 337) (Ralstonia eutropha).